The sequence spans 545 residues: Carboxypeptidase Y homolog A (545 aa).

An N-terminal signal peptide occupies residues 1–18 (MKSSLALALLVGGAIASG). Residues 19-125 (PQQQVLREPV…RLDTYDLRVK (107 aa)) constitute a propeptide that is removed on maturation. Intrachain disulfides connect Cys179–Cys418, Cys313–Cys327, Cys337–Cys360, Cys344–Cys353, and Cys382–Cys388. A glycan (N-linked (GlcNAc...) asparagine) is linked at Asn210. The active site involves Ser266. Asp457 is a catalytic residue. Residues Asn487 and Asn507 are each glycosylated (N-linked (GlcNAc...) asparagine). His518 is an active-site residue.

It belongs to the peptidase S10 family.

Its subcellular location is the vacuole. It catalyses the reaction Release of a C-terminal amino acid with broad specificity.. Its function is as follows. Vacuolar carboxypeptidase involved in degradation of small peptides. Digests preferentially peptides containing an aliphatic or hydrophobic residue in P1' position, as well as methionine, leucine or phenylalanine in P1 position of ester substrate. In Ajellomyces capsulatus (strain NAm1 / WU24) (Darling's disease fungus), this protein is Carboxypeptidase Y homolog A (CPYA).